The sequence spans 287 residues: Heterodimeric geranylgeranyl pyrophosphate synthase small subunit 2, chloroplastic (287 aa).

The Mg(2+) site is built by Glu103 and Asp109. The dimethylallyl diphosphate site is built by Lys204, Gln241, and Lys250.

This sequence belongs to the FPP/GGPP synthase family. In terms of assembly, part of a heterodimeric geranyl(geranyl)diphosphate synthase. The cofactor is Mg(2+). In terms of tissue distribution, mainly expressed in trichomes, and, to a lower extent, in roots, leaves, flowers and stems.

Its subcellular location is the plastid. It localises to the chloroplast thylakoid membrane. Its function is as follows. Heterodimeric geranyl(geranyl)-diphosphate (GPP) synthase small subunit. The small subunit alone is inactive in vitro while the large subunit GGPPS1 catalyzes mainly the production of geranygeranyl-diphosphate in vitro. Upon association of the two subunits, the product profile changes and the production of gerany-diphosphate is strongly increased. This chain is Heterodimeric geranylgeranyl pyrophosphate synthase small subunit 2, chloroplastic, found in Cannabis sativa (Hemp).